Here is a 288-residue protein sequence, read N- to C-terminus: Acetyl-coenzyme A carboxylase carboxyl transferase subunit beta (288 aa).

The CoA carboxyltransferase N-terminal domain maps to 34-288; the sequence is LFAKCPGCKQ…TLLSFHGGVQ (255 aa). 4 residues coordinate Zn(2+): Cys38, Cys41, Cys56, and Cys59. The C4-type zinc-finger motif lies at 38 to 59; sequence CPGCKQAIYQKDLGQAKICPNC.

This sequence belongs to the AccD/PCCB family. In terms of assembly, acetyl-CoA carboxylase is a heterohexamer composed of biotin carboxyl carrier protein (AccB), biotin carboxylase (AccC) and two subunits each of ACCase subunit alpha (AccA) and ACCase subunit beta (AccD). Requires Zn(2+) as cofactor.

The protein resides in the cytoplasm. It catalyses the reaction N(6)-carboxybiotinyl-L-lysyl-[protein] + acetyl-CoA = N(6)-biotinyl-L-lysyl-[protein] + malonyl-CoA. It functions in the pathway lipid metabolism; malonyl-CoA biosynthesis; malonyl-CoA from acetyl-CoA: step 1/1. Functionally, component of the acetyl coenzyme A carboxylase (ACC) complex. Biotin carboxylase (BC) catalyzes the carboxylation of biotin on its carrier protein (BCCP) and then the CO(2) group is transferred by the transcarboxylase to acetyl-CoA to form malonyl-CoA. The protein is Acetyl-coenzyme A carboxylase carboxyl transferase subunit beta of Streptococcus thermophilus (strain CNRZ 1066).